We begin with the raw amino-acid sequence, 217 residues long: Glycosylphosphatidylinositol anchor biosynthesis protein 11 (217 aa).

The next 6 membrane-spanning stretches (helical) occupy residues 45–61, 74–94, 111–131, 138–158, 169–189, and 195–215; these read TWQTIPFHLIVLSYWFI, WLLVPCQVLYLALQFNPATVY, VTCILLTIPCMLLVVLFGAPF, TWLLSLHCCVLSYPAVYSVLN, YFISIAVGCWISCLAIPLDWD, and WPIPLVVGAQLGAMFGYTFCS.

This sequence belongs to the PIGF family.

The protein localises to the endoplasmic reticulum membrane. The protein operates within glycolipid biosynthesis; glycosylphosphatidylinositol-anchor biosynthesis. In terms of biological role, acts in the GPI biosynthetic pathway between GlcNAc-PI synthesis and GPI transfer to protein. The protein is Glycosylphosphatidylinositol anchor biosynthesis protein 11 (GPI11) of Eremothecium gossypii (strain ATCC 10895 / CBS 109.51 / FGSC 9923 / NRRL Y-1056) (Yeast).